Here is a 447-residue protein sequence, read N- to C-terminus: 3-phosphoshikimate 1-carboxyvinyltransferase (447 aa).

The segment at 1-22 is disordered; sequence MTPSLKRLSGAMRARPAPALSG. Positions 30, 31, and 35 each coordinate 3-phosphoshikimate. Lys30 lines the phosphoenolpyruvate pocket. 2 residues coordinate phosphoenolpyruvate: Gly102 and Arg130. 3-phosphoshikimate contacts are provided by Ser173, Gln175, Asp325, and Lys352. A phosphoenolpyruvate-binding site is contributed by Gln175. The active-site Proton acceptor is the Asp325. Phosphoenolpyruvate-binding residues include Arg356 and Arg401.

It belongs to the EPSP synthase family. As to quaternary structure, monomer.

The protein localises to the cytoplasm. It catalyses the reaction 3-phosphoshikimate + phosphoenolpyruvate = 5-O-(1-carboxyvinyl)-3-phosphoshikimate + phosphate. It participates in metabolic intermediate biosynthesis; chorismate biosynthesis; chorismate from D-erythrose 4-phosphate and phosphoenolpyruvate: step 6/7. Its function is as follows. Catalyzes the transfer of the enolpyruvyl moiety of phosphoenolpyruvate (PEP) to the 5-hydroxyl of shikimate-3-phosphate (S3P) to produce enolpyruvyl shikimate-3-phosphate and inorganic phosphate. This is 3-phosphoshikimate 1-carboxyvinyltransferase from Maricaulis maris (strain MCS10) (Caulobacter maris).